Here is a 443-residue protein sequence, read N- to C-terminus: Acyl transferase 10 (443 aa).

Active-site proton acceptor residues include His182 and Asp386.

It belongs to the plant acyltransferase family.

Its function is as follows. Involved in the incorporation of ferulate into the cell wall. May act as arabinoxylan feruloyl transferase. May function as p-coumaroyl-CoA transferase involved in glucuronoarabinoxylan modification. This Oryza sativa subsp. japonica (Rice) protein is Acyl transferase 10.